Consider the following 3658-residue polypeptide: E3 ubiquitin-protein ligase UPL2 (3658 aa).

Basic and acidic residues predominate over residues 884 to 893 (DEKKSVDRAS). Residues 884 to 914 (DEKKSVDRASDNSVSASSSTAERESDEDSSN) form a disordered region. A compositionally biased stretch (low complexity) spans 894–903 (DNSVSASSST). Positions 1271–1312 (QPDEAIVGMIVEMGFSRSRAEDALRRVGTNSVEMAMDWLFTN) constitute a UBA domain. Residues 1318-1337 (QEDDELAQALALSLGNSSET) enclose the UIM domain. 9 disordered regions span residues 1331–1360 (LGNS…KEPP), 1702–1733 (VSGS…SKSH), 2004–2038 (AEQL…VDEL), 2052–2072 (VDNG…RGSS), 2113–2204 (HVED…DDMV), 2293–2313 (PLFS…SAGS), 2417–2487 (ERET…EGGG), 2503–2591 (SAQG…PEVN), and 2958–2987 (SPSS…AESE). Residues 1338–1347 (PKLEDTEKPV) are compositionally biased toward basic and acidic residues. Over residues 2007-2027 (LKSEVPNEQKNTDSDERHDSH) the composition is skewed to basic and acidic residues. Over residues 2028–2038 (GTSTSTEVDEL) the composition is skewed to polar residues. Acidic residues-rich tracts occupy residues 2117–2144 (RADD…DSVE) and 2156–2204 (DVED…DDMV). Over residues 2297 to 2313 (RPSQTGNTASVSASAGS) the composition is skewed to polar residues. Low complexity predominate over residues 2422 to 2431 (TTEVQEQQQP). The segment covering 2503 to 2518 (SAQGQSDTSGIQNVSV) has biased composition (polar residues). Ser2582 is modified (phosphoserine). The 342-residue stretch at 3317–3658 (SPQDLKGRLN…HEANEGFGFA (342 aa)) folds into the HECT domain. Cys3625 serves as the catalytic Glycyl thioester intermediate.

The protein belongs to the UPL family. TOM1/PTR1 subfamily. As to expression, widely expressed. Expressed in root, stem, cauline and rosette leaf, seedling and flower (at protein level).

It carries out the reaction S-ubiquitinyl-[E2 ubiquitin-conjugating enzyme]-L-cysteine + [acceptor protein]-L-lysine = [E2 ubiquitin-conjugating enzyme]-L-cysteine + N(6)-ubiquitinyl-[acceptor protein]-L-lysine.. Its pathway is protein modification; protein ubiquitination. Its function is as follows. Probable E3 ubiquitin-protein ligase which mediates ubiquitination and subsequent proteasomal degradation of target proteins. This is E3 ubiquitin-protein ligase UPL2 (UPL2) from Arabidopsis thaliana (Mouse-ear cress).